The chain runs to 295 residues: Aspartate carbamoyltransferase catalytic subunit (295 aa).

Carbamoyl phosphate-binding residues include arginine 49 and threonine 50. Residue lysine 77 participates in L-aspartate binding. Arginine 99, histidine 127, and glutamine 130 together coordinate carbamoyl phosphate. L-aspartate-binding residues include arginine 161 and arginine 212. Carbamoyl phosphate-binding residues include glycine 251 and proline 252.

Belongs to the aspartate/ornithine carbamoyltransferase superfamily. ATCase family. Heterododecamer (2C3:3R2) of six catalytic PyrB chains organized as two trimers (C3), and six regulatory PyrI chains organized as three dimers (R2).

It carries out the reaction carbamoyl phosphate + L-aspartate = N-carbamoyl-L-aspartate + phosphate + H(+). Its pathway is pyrimidine metabolism; UMP biosynthesis via de novo pathway; (S)-dihydroorotate from bicarbonate: step 2/3. In terms of biological role, catalyzes the condensation of carbamoyl phosphate and aspartate to form carbamoyl aspartate and inorganic phosphate, the committed step in the de novo pyrimidine nucleotide biosynthesis pathway. The chain is Aspartate carbamoyltransferase catalytic subunit from Campylobacter jejuni subsp. jejuni serotype O:23/36 (strain 81-176).